Here is a 58-residue protein sequence, read N- to C-terminus: Large ribosomal subunit protein bL32 (58 aa).

Basic residues predominate over residues 1–15 (MAVPKKKTSKAKRNQ). The segment at 1 to 23 (MAVPKKKTSKAKRNQRSATWKGK) is disordered.

It belongs to the bacterial ribosomal protein bL32 family.

The sequence is that of Large ribosomal subunit protein bL32 from Parasynechococcus marenigrum (strain WH8102).